The primary structure comprises 197 residues: Holliday junction branch migration complex subunit RuvA (197 aa).

Residues 1 to 63 (MIEFIRGYVD…EDVLALYGFH (63 aa)) form a domain I region. The domain II stretch occupies residues 64-142 (TRQERMLFAK…AIVPDAFPNL (79 aa)). The tract at residues 143–149 (FTEPLEE) is flexible linker. The segment at 149-197 (ETNALSEAIEALKALGYADKEIQKVVPMLRQERLSTEGYIKLALQKLLK) is domain III.

Belongs to the RuvA family. In terms of assembly, homotetramer. Forms an RuvA(8)-RuvB(12)-Holliday junction (HJ) complex. HJ DNA is sandwiched between 2 RuvA tetramers; dsDNA enters through RuvA and exits via RuvB. An RuvB hexamer assembles on each DNA strand where it exits the tetramer. Each RuvB hexamer is contacted by two RuvA subunits (via domain III) on 2 adjacent RuvB subunits; this complex drives branch migration. In the full resolvosome a probable DNA-RuvA(4)-RuvB(12)-RuvC(2) complex forms which resolves the HJ.

The protein resides in the cytoplasm. In terms of biological role, the RuvA-RuvB-RuvC complex processes Holliday junction (HJ) DNA during genetic recombination and DNA repair, while the RuvA-RuvB complex plays an important role in the rescue of blocked DNA replication forks via replication fork reversal (RFR). RuvA specifically binds to HJ cruciform DNA, conferring on it an open structure. The RuvB hexamer acts as an ATP-dependent pump, pulling dsDNA into and through the RuvAB complex. HJ branch migration allows RuvC to scan DNA until it finds its consensus sequence, where it cleaves and resolves the cruciform DNA. The polypeptide is Holliday junction branch migration complex subunit RuvA (Anoxybacillus flavithermus (strain DSM 21510 / WK1)).